A 427-amino-acid chain; its full sequence is Thymidine phosphorylase (427 aa).

Belongs to the thymidine/pyrimidine-nucleoside phosphorylase family. As to quaternary structure, homodimer.

The catalysed reaction is thymidine + phosphate = 2-deoxy-alpha-D-ribose 1-phosphate + thymine. In terms of biological role, the enzymes which catalyze the reversible phosphorolysis of pyrimidine nucleosides are involved in the degradation of these compounds and in their utilization as carbon and energy sources, or in the rescue of pyrimidine bases for nucleotide synthesis. This chain is Thymidine phosphorylase (deoA), found in Mycobacterium tuberculosis (strain CDC 1551 / Oshkosh).